The sequence spans 488 residues: Calcium/calmodulin-dependent protein kinase type II subunit delta (488 aa).

Alanine 2 is subject to N-acetylalanine. The region spanning 14-272 is the Protein kinase domain; sequence YQLFEELGKG…ASEALKHPWI (259 aa). ATP-binding positions include 20 to 28 and lysine 43; that span reads LGKGAFSVV. Aspartate 136 functions as the Proton acceptor in the catalytic mechanism. Residues 283–292 are autoinhibitory domain; the sequence is HRQETVDCLK. Threonine 287 is subject to Phosphothreonine; by autocatalysis. The interval 291–301 is calmodulin-binding; the sequence is LKKFNARRKLK. Residues threonine 306 and threonine 307 each carry the phosphothreonine; by autocatalysis modification. Phosphoserine is present on serine 315. Lysine 317 is subject to N6-acetyllysine. Residues serine 318 and serine 340 each carry the phosphoserine modification. Positions 325–350 are disordered; the sequence is GVKKRKSSSSVQMMESTESSNTTIED. Polar residues predominate over residues 332–347; that stretch reads SSSVQMMESTESSNTT. The residue at position 341 (threonine 341) is a Phosphothreonine. Serine 343 is modified (phosphoserine). 2 positions are modified to phosphothreonine: threonine 346 and threonine 347. A Phosphoserine modification is found at serine 414.

It belongs to the protein kinase superfamily. CAMK Ser/Thr protein kinase family. CaMK subfamily. As to quaternary structure, CAMK2 is composed of 4 different chains: alpha (CAMK2A), beta (CAMK2B), gamma (CAMK2G), and delta (CAMK2D). The different isoforms assemble into homo- or heteromultimeric holoenzymes composed of 12 subunits with two hexameric rings stacked one on top of the other. Interacts with RRAD and CACNB2. Post-translationally, autophosphorylation of Thr-287 following activation by Ca(2+)/calmodulin. Phosphorylation of Thr-287 locks the kinase into an activated state.

The protein localises to the cell membrane. Its subcellular location is the sarcolemma. It is found in the sarcoplasmic reticulum membrane. It catalyses the reaction L-seryl-[protein] + ATP = O-phospho-L-seryl-[protein] + ADP + H(+). The catalysed reaction is L-threonyl-[protein] + ATP = O-phospho-L-threonyl-[protein] + ADP + H(+). Activated by Ca(2+)/calmodulin. Binding of calmodulin results in conformational change that relieves intrasteric autoinhibition and allows autophosphorylation of Thr-287 which turns the kinase in a constitutively active form and confers to the kinase a Ca(2+)-independent activity. Its function is as follows. Calcium/calmodulin-dependent protein kinase involved in the regulation of Ca(2+) homeostatis and excitation-contraction coupling (ECC) in heart by targeting ion channels, transporters and accessory proteins involved in Ca(2+) influx into the myocyte, Ca(2+) release from the sarcoplasmic reticulum (SR), SR Ca(2+) uptake and Na(+) and K(+) channel transport. Targets also transcription factors and signaling molecules to regulate heart function. In its activated form, is involved in the pathogenesis of dilated cardiomyopathy and heart failure. Contributes to cardiac decompensation and heart failure by regulating SR Ca(2+) release via direct phosphorylation of RYR2 Ca(2+) channel on 'Ser-2808'. In the nucleus, phosphorylates the MEF2 repressor HDAC4, promoting its nuclear export and binding to 14-3-3 protein, and expression of MEF2 and genes involved in the hypertrophic program. Is essential for left ventricular remodeling responses to myocardial infarction. In pathological myocardial remodeling acts downstream of the beta adrenergic receptor signaling cascade to regulate key proteins involved in ECC. Regulates Ca(2+) influx to myocytes by binding and phosphorylating the L-type Ca(2+) channel subunit beta-2 CACNB2. In addition to Ca(2+) channels, can target and regulate the cardiac sarcolemmal Na(+) channel Nav1.5/SCN5A and the K+ channel Kv4.3/KCND3, which contribute to arrhythmogenesis in heart failure. Phosphorylates phospholamban (PLN/PLB), an endogenous inhibitor of SERCA2A/ATP2A2, contributing to the enhancement of SR Ca(2+) uptake that may be important in frequency-dependent acceleration of relaxation (FDAR) and maintenance of contractile function during acidosis. May participate in the modulation of skeletal muscle function in response to exercise, by regulating SR Ca(2+) transport through phosphorylation of PLN/PLB and triadin, a ryanodine receptor-coupling factor. In response to interferon-gamma (IFN-gamma) stimulation, catalyzes phosphorylation of STAT1, stimulating the JAK-STAT signaling pathway. This is Calcium/calmodulin-dependent protein kinase type II subunit delta (CAMK2D) from Bos taurus (Bovine).